The primary structure comprises 88 residues: MITQEEQQKIIDRFGNGPNDTGTPEVQIAIFTKRIEHLTEHLEDHPNDNSTRQGLLDLVGKRRRLLNYLQENEIERYRTIRDELELRK.

A compositionally biased stretch (basic and acidic residues) spans 1–12 (MITQEEQQKIID). The disordered stretch occupies residues 1–24 (MITQEEQQKIIDRFGNGPNDTGTP).

Belongs to the universal ribosomal protein uS15 family. As to quaternary structure, part of the 30S ribosomal subunit. Forms a bridge to the 50S subunit in the 70S ribosome, contacting the 23S rRNA.

In terms of biological role, one of the primary rRNA binding proteins, it binds directly to 16S rRNA where it helps nucleate assembly of the platform of the 30S subunit by binding and bridging several RNA helices of the 16S rRNA. Its function is as follows. Forms an intersubunit bridge (bridge B4) with the 23S rRNA of the 50S subunit in the ribosome. In Salinibacter ruber (strain DSM 13855 / M31), this protein is Small ribosomal subunit protein uS15.